A 272-amino-acid chain; its full sequence is 3-hydroxyanthranilate 3,4-dioxygenase (272 aa).

Residues 1–154 (MMEWIDENSS…SEEHKTGKPS (154 aa)) form a domain A (catalytic) region. Arg-38 provides a ligand contact to O2. The Fe cation site is built by His-42, Glu-48, and His-86. Glu-48 is a substrate binding site. Substrate contacts are provided by Arg-90 and Glu-100. The segment at 155–169 (KESSCSINVDTETEL) is linker. The domain B stretch occupies residues 170–272 (MEPFPLKQWL…SITVDSLANK (103 aa)).

This sequence belongs to the 3-HAO family. Requires Fe(2+) as cofactor.

It localises to the cytoplasm. It carries out the reaction 3-hydroxyanthranilate + O2 = (2Z,4Z)-2-amino-3-carboxymuconate 6-semialdehyde. Its pathway is cofactor biosynthesis; NAD(+) biosynthesis; quinolinate from L-kynurenine: step 3/3. Catalyzes the oxidative ring opening of 3-hydroxyanthranilate to 2-amino-3-carboxymuconate semialdehyde, which spontaneously cyclizes to quinolinate. The sequence is that of 3-hydroxyanthranilate 3,4-dioxygenase from Nematostella vectensis (Starlet sea anemone).